A 464-amino-acid chain; its full sequence is Gamma-aminobutyric acid receptor subunit alpha-5 (464 aa).

The N-terminal stretch at 1 to 25 (MDNGMLSRFIMTKTLLVFCISMTLS) is a signal peptide. Over 26-260 (SHFGFSQMPT…FHLKRKIGYF (235 aa)) the chain is Extracellular. Residue Asn45 is glycosylated (N-linked (GlcNAc...) asparagine). Arg101 provides a ligand contact to 4-aminobutanoate. N-linked (GlcNAc...) asparagine glycosylation occurs at Asn145. Thr164 lines the 4-aminobutanoate pocket. Cys173 and Cys187 are disulfide-bonded. N-linked (GlcNAc...) asparagine glycosylation is found at Asn207 and Asn236. Transmembrane regions (helical) follow at residues 261–281 (VIQT…SFWL), 287–308 (PART…ISAR), and 319–340 (AMDW…EFAT). Topologically, residues 341–429 (VNYFTKRGWA…TYNSISKIDK (89 aa)) are cytoplasmic. Lys355 participates in a covalent cross-link: Glycyl lysine isopeptide (Lys-Gly) (interchain with G-Cter in ubiquitin). A disordered region spans residues 382–414 (KLTHPPNIPKEQLPGGTGNAVGTASIRASEEKT). The chain crosses the membrane as a helical span at residues 430-450 (MSRIVFPILFGTFNLVYWATY).

This sequence belongs to the ligand-gated ion channel (TC 1.A.9) family. Gamma-aminobutyric acid receptor (TC 1.A.9.5) subfamily. GABRA5 sub-subfamily. Heteropentamer, formed by a combination of alpha (GABRA1-6), beta (GABRB1-3), gamma (GABRG1-3), delta (GABRD), epsilon (GABRE), rho (GABRR1-3), pi (GABRP) and theta (GABRQ) chains, each subunit exhibiting distinct physiological and pharmacological properties. In terms of tissue distribution, expressed in brain areas such as cerebral cortex, hippocampal formation and olfactory bulb granular layer.

The protein localises to the postsynaptic cell membrane. It localises to the cell membrane. The catalysed reaction is chloride(in) = chloride(out). With respect to regulation, allosterically potentiated by alphaxalone. Allosterically inhibited by pregnenolone sulfate. Inhibited by zinc and lanthanum. In terms of biological role, alpha subunit of the heteropentameric ligand-gated chloride channel gated by gamma-aminobutyric acid (GABA), a major inhibitory neurotransmitter in the brain. GABA-gated chloride channels, also named GABA(A) receptors (GABAAR), consist of five subunits arranged around a central pore and contain GABA active binding site(s) located at the alpha and beta subunit interface(s). When activated by GABA, GABAARs selectively allow the flow of chloride anions across the cell membrane down their electrochemical gradient. GABAARs containing alpha-5/GABRA5 subunits are mainly extrasynaptic and contribute to the tonic GABAergic inhibition in the hippocampus. Extrasynaptic alpha-5-containing GABAARs in CA1 pyramidal neurons play a role in learning and memory processes. The polypeptide is Gamma-aminobutyric acid receptor subunit alpha-5 (Rattus norvegicus (Rat)).